Consider the following 119-residue polypeptide: MGKMHTSEMLKHVYDINLSYLLLAQRLISQDKPSAMFRLGISEEMATTLGGLTLPQMVKLAETNQLVCQFRFDSHQTITRLTQDSRVDDLQQIHTGILLSTRLLTEVSQTDEVARKKRA.

It belongs to the FlhD family. Homodimer; disulfide-linked. Forms a heterohexamer composed of two FlhC and four FlhD subunits. Each FlhC binds a FlhD dimer, forming a heterotrimer, and a hexamer assembles by dimerization of two heterotrimers.

The protein localises to the cytoplasm. In terms of biological role, functions in complex with FlhC as a master transcriptional regulator that regulates transcription of several flagellar and non-flagellar operons by binding to their promoter region. Activates expression of class 2 flagellar genes, including fliA, which is a flagellum-specific sigma factor that turns on the class 3 genes. Also regulates genes whose products function in a variety of physiological pathways. In Enterobacter sp. (strain 638), this protein is Flagellar transcriptional regulator FlhD.